Reading from the N-terminus, the 282-residue chain is Pantothenate synthetase (282 aa).

Position 26-33 (26-33) interacts with ATP; sequence MGNLHEGH. Residue His-33 is the Proton donor of the active site. Gln-57 contributes to the (R)-pantoate binding site. Gln-57 lines the beta-alanine pocket. 148-151 contacts ATP; it reads GKKD. Gln-154 is a (R)-pantoate binding site. An ATP-binding site is contributed by 185–188; the sequence is LSSR.

This sequence belongs to the pantothenate synthetase family. Homodimer.

It is found in the cytoplasm. The enzyme catalyses (R)-pantoate + beta-alanine + ATP = (R)-pantothenate + AMP + diphosphate + H(+). It participates in cofactor biosynthesis; (R)-pantothenate biosynthesis; (R)-pantothenate from (R)-pantoate and beta-alanine: step 1/1. Its function is as follows. Catalyzes the condensation of pantoate with beta-alanine in an ATP-dependent reaction via a pantoyl-adenylate intermediate. This is Pantothenate synthetase from Paracidovorax citrulli (strain AAC00-1) (Acidovorax citrulli).